We begin with the raw amino-acid sequence, 201 residues long: Probable thymidylate kinase (201 aa).

10–17 lines the ATP pocket; it reads GIDGSGKS.

It belongs to the thymidylate kinase family.

It carries out the reaction dTMP + ATP = dTDP + ADP. This chain is Probable thymidylate kinase, found in Methanococcoides burtonii (strain DSM 6242 / NBRC 107633 / OCM 468 / ACE-M).